A 176-amino-acid chain; its full sequence is dCTP deaminase (176 aa).

DCTP is bound by residues 99-104 and aspartate 115; that span reads RSTLAR. Glutamate 125 acts as the Proton donor/acceptor in catalysis. Residue glutamine 163 coordinates dCTP.

Belongs to the dCTP deaminase family. In terms of assembly, homotrimer.

The catalysed reaction is dCTP + H2O + H(+) = dUTP + NH4(+). It participates in pyrimidine metabolism; dUMP biosynthesis; dUMP from dCTP (dUTP route): step 1/2. In terms of biological role, catalyzes the deamination of dCTP to dUTP. This is dCTP deaminase from Pyrobaculum arsenaticum (strain DSM 13514 / JCM 11321 / PZ6).